A 141-amino-acid polypeptide reads, in one-letter code: Hemoglobin subunit alpha (141 aa).

One can recognise a Globin domain in the interval 1–141 (VLSGTDKSNI…VSTVLTSKYR (141 aa)). A Phosphoserine modification is found at Ser-3. An N6-succinyllysine mark is found at Lys-7 and Lys-11. Residue Lys-16 is modified to N6-acetyllysine; alternate. N6-succinyllysine; alternate is present on Lys-16. Position 24 is a phosphotyrosine (Tyr-24). Ser-35 carries the phosphoserine modification. At Lys-40 the chain carries N6-succinyllysine. Position 49 is a phosphoserine (Ser-49). His-58 provides a ligand contact to O2. His-87 contacts heme b. A Phosphoserine modification is found at Ser-102. The residue at position 108 (Thr-108) is a Phosphothreonine. Phosphoserine is present on Ser-124. Residues Thr-134 and Thr-137 each carry the phosphothreonine modification. Position 138 is a phosphoserine (Ser-138).

It belongs to the globin family. Heterotetramer of two alpha chains and two beta chains. As to expression, red blood cells.

Its function is as follows. Involved in oxygen transport from the lung to the various peripheral tissues. Functionally, hemopressin acts as an antagonist peptide of the cannabinoid receptor CNR1. Hemopressin-binding efficiently blocks cannabinoid receptor CNR1 and subsequent signaling. This Talpa europaea (European mole) protein is Hemoglobin subunit alpha (HBA).